Here is a 79-residue protein sequence, read N- to C-terminus: Conotoxin Tr6.2 (79 aa).

Residues 1–22 form the signal peptide; it reads MKLTCVLIISVLFLTASQLITA. A propeptide spanning residues 23 to 47 is cleaved from the precursor; the sequence is VYSRDKQQYRAARLRDEMRNLKGAR. Cystine bridges form between cysteine 49–cysteine 62, cysteine 56–cysteine 67, and cysteine 61–cysteine 77. Residues proline 60 and proline 63 each carry the 4-hydroxyproline modification.

It belongs to the conotoxin O1 superfamily. Expressed by the venom duct.

It localises to the secreted. Its function is as follows. Ion channel inhibitor that inhibits the increase in intracellular calcium upon depolarization in DRG neurons. In vivo, both intraperitoneal and intracranial injections into mice induce hyperactivity. The sequence is that of Conotoxin Tr6.2 from Conus terebra (Sea snail).